The following is a 104-amino-acid chain: Thioredoxin (104 aa).

One can recognise a Thioredoxin domain in the interval 2–104; the sequence is AIVKATDQSF…ALQELVNKHL (103 aa). Cysteine 29 and cysteine 32 are disulfide-bonded.

Belongs to the thioredoxin family.

Participates in various redox reactions through the reversible oxidation of its active center dithiol to a disulfide and catalyzes dithiol-disulfide exchange reactions. This chain is Thioredoxin (trxA), found in Bacillus subtilis (strain 168).